The sequence spans 494 residues: Aspartyl/glutamyl-tRNA(Asn/Gln) amidotransferase subunit B (494 aa).

It belongs to the GatB/GatE family. GatB subfamily. Heterotrimer of A, B and C subunits.

It carries out the reaction L-glutamyl-tRNA(Gln) + L-glutamine + ATP + H2O = L-glutaminyl-tRNA(Gln) + L-glutamate + ADP + phosphate + H(+). The catalysed reaction is L-aspartyl-tRNA(Asn) + L-glutamine + ATP + H2O = L-asparaginyl-tRNA(Asn) + L-glutamate + ADP + phosphate + 2 H(+). Its function is as follows. Allows the formation of correctly charged Asn-tRNA(Asn) or Gln-tRNA(Gln) through the transamidation of misacylated Asp-tRNA(Asn) or Glu-tRNA(Gln) in organisms which lack either or both of asparaginyl-tRNA or glutaminyl-tRNA synthetases. The reaction takes place in the presence of glutamine and ATP through an activated phospho-Asp-tRNA(Asn) or phospho-Glu-tRNA(Gln). In Trichodesmium erythraeum (strain IMS101), this protein is Aspartyl/glutamyl-tRNA(Asn/Gln) amidotransferase subunit B.